We begin with the raw amino-acid sequence, 316 residues long: ATP synthase gamma chain (316 aa).

The protein belongs to the ATPase gamma chain family. In terms of assembly, F-type ATPases have 2 components, CF(1) - the catalytic core - and CF(0) - the membrane proton channel. CF(1) has five subunits: alpha(3), beta(3), gamma(1), delta(1), epsilon(1). CF(0) has three main subunits: a, b and c.

Its subcellular location is the cellular thylakoid membrane. Functionally, produces ATP from ADP in the presence of a proton gradient across the membrane. The gamma chain is believed to be important in regulating ATPase activity and the flow of protons through the CF(0) complex. The sequence is that of ATP synthase gamma chain from Synechococcus elongatus (strain ATCC 33912 / PCC 7942 / FACHB-805) (Anacystis nidulans R2).